The chain runs to 80 residues: Exodeoxyribonuclease 7 small subunit (80 aa).

The protein belongs to the XseB family. Heterooligomer composed of large and small subunits.

It localises to the cytoplasm. It catalyses the reaction Exonucleolytic cleavage in either 5'- to 3'- or 3'- to 5'-direction to yield nucleoside 5'-phosphates.. Its function is as follows. Bidirectionally degrades single-stranded DNA into large acid-insoluble oligonucleotides, which are then degraded further into small acid-soluble oligonucleotides. The chain is Exodeoxyribonuclease 7 small subunit from Rickettsia conorii (strain ATCC VR-613 / Malish 7).